We begin with the raw amino-acid sequence, 96 residues long: Large ribosomal subunit protein eL14 (96 aa).

It belongs to the eukaryotic ribosomal protein eL14 family.

The chain is Large ribosomal subunit protein eL14 from Metallosphaera sedula (strain ATCC 51363 / DSM 5348 / JCM 9185 / NBRC 15509 / TH2).